Consider the following 269-residue polypeptide: Glutamate racemase (269 aa).

Substrate is bound by residues 7-8 and 39-40; these read DS and YG. The active-site Proton donor/acceptor is cysteine 70. Substrate is bound at residue 71-72; sequence NT. Residue cysteine 194 is the Proton donor/acceptor of the active site. Substrate is bound at residue 195 to 196; the sequence is TH.

It belongs to the aspartate/glutamate racemases family.

The catalysed reaction is L-glutamate = D-glutamate. It functions in the pathway cell wall biogenesis; peptidoglycan biosynthesis. Functionally, provides the (R)-glutamate required for cell wall biosynthesis. This chain is Glutamate racemase, found in Ruegeria sp. (strain TM1040) (Silicibacter sp.).